Reading from the N-terminus, the 260-residue chain is Small ribosomal subunit protein uS2 (260 aa).

This sequence belongs to the universal ribosomal protein uS2 family.

The chain is Small ribosomal subunit protein uS2 from Mesorhizobium japonicum (strain LMG 29417 / CECT 9101 / MAFF 303099) (Mesorhizobium loti (strain MAFF 303099)).